Consider the following 833-residue polypeptide: Mannosyl-oligosaccharide glucosidase (833 aa).

Over 1–10 (MLISKSKMFK) the chain is Cytoplasmic. The chain crosses the membrane as a helical; Signal-anchor for type II membrane protein span at residues 11–28 (TFWILTSIVLLASATVDI). At 29-833 (SKLQEFEEYQ…ALVVNILGRF (805 aa)) the chain is on the lumenal side. Substrate is bound by residues N42 and N122. Residues N42, N122, and N135 are each glycosylated (N-linked (GlcNAc...) asparagine). E143 contacts substrate. Catalysis depends on D601, which acts as the Proton donor. C669 and C685 form a disulfide bridge. N787 is a glycosylation site (N-linked (GlcNAc...) asparagine). E804 functions as the Proton acceptor in the catalytic mechanism.

It belongs to the glycosyl hydrolase 63 family. In terms of processing, N-glycosylated.

The protein localises to the endoplasmic reticulum membrane. The enzyme catalyses N(4)-(alpha-D-Glc-(1-&gt;2)-alpha-D-Glc-(1-&gt;3)-alpha-D-Glc-(1-&gt;3)-alpha-D-Man-(1-&gt;2)-alpha-D-Man-(1-&gt;2)-alpha-D-Man-(1-&gt;3)-[alpha-D-Man-(1-&gt;2)-alpha-D-Man-(1-&gt;3)-[alpha-D-Man-(1-&gt;2)-alpha-D-Man-(1-&gt;6)]-alpha-D-Man-(1-&gt;6)]-beta-D-Man-(1-&gt;4)-beta-D-GlcNAc-(1-&gt;4)-beta-D-GlcNAc)-L-asparaginyl-[protein] + H2O = N(4)-(alpha-D-Glc-(1-&gt;3)-alpha-D-Glc-(1-&gt;3)-alpha-D-Man-(1-&gt;2)-alpha-D-Man-(1-&gt;2)-alpha-D-Man-(1-&gt;3)-[alpha-D-Man-(1-&gt;2)-alpha-D-Man-(1-&gt;3)-[alpha-D-Man-(1-&gt;2)-alpha-D-Man-(1-&gt;6)]-alpha-D-Man-(1-&gt;6)]-beta-D-Man-(1-&gt;4)-beta-D-GlcNAc-(1-&gt;4)-beta-D-GlcNAc)-L-asparaginyl-[protein] + beta-D-glucose. It participates in glycan metabolism; N-glycan degradation. With respect to regulation, miglitol is an effective inhibitor at 1 mM. Cleaves the distal alpha 1,2-linked glucose residue from the Glc(3)Man(9)GlcNAc(2) oligosaccharide precursor highly specifically. Seems to play a role in beta-1,6-glucan synthesis. In Saccharomyces cerevisiae (strain ATCC 204508 / S288c) (Baker's yeast), this protein is Mannosyl-oligosaccharide glucosidase (CWH41).